We begin with the raw amino-acid sequence, 225 residues long: SKNWKLSIRCGGYTLKVLMENKLLPEPPSTRKKRILESHNNTLVDPCEEHKKKNPDASVKFSEFLKKCSEMWKTIFAKEKGKFEDMAKADKAHYEREMKTYIPPKGEKKKKFKDPNAPKRPPLAFFLFCSEYRPKIKGEHPGLSIDDVVKKLAGMWNNTAAADKQFYEKKAAKLKEKYKKDIAAYRAKGMPNSAKKRAVKAEKSKKKREEEEDEEDEQEEENEEE.

The SAND domain occupies 1–25 (SKNWKLSIRCGGYTLKVLMENKLLP). 2 consecutive DNA-binding regions (HMG box) follow at residues 26–102 (EPPS…KTYI) and 118–186 (PKRP…AAYR). The Nuclear localization signal signature appears at 66–83 (KKCSEMWKTIFAKEKGKF). The stretch at 157-224 (NNTAAADKQF…EDEQEEENEE (68 aa)) forms a coiled coil. Residues 185–225 (YRAKGMPNSAKKRAVKAEKSKKKREEEEDEEDEQEEENEEE) form a disordered region. The span at 194–206 (AKKRAVKAEKSKK) shows a compositional bias: basic residues. Residues 210-225 (EEEDEEDEQEEENEEE) are compositionally biased toward acidic residues.

As to quaternary structure, homodimer. Interacts with members of the HP1 family of nonhistone chromosomal protein, such as CBX5 and CBX3 via the PxVxL motif. Interacts with ETS1; the interaction is direct and modulates ETS1 transcriptional activity. Interacts with the MRN complex which is composed of two heterodimers RAD50/MRE11 associated with a single NBN; recruits the complex to PML-related bodies. Interacts with HIPK2; positively regulates TP53-dependent transcription. Interacts with CASP8AP2; may negatively regulate CASP8AP2 export from the nucleus to the cytoplasm. Post-translationally, sumoylated. Sumoylated with SUMO1. Sumoylation depends on a functional nuclear localization signal but is not necessary for nuclear import or nuclear body targeting. Sumoylation may stabilize the interaction with CBX5. In terms of processing, phosphorylated.

It localises to the nucleus. The protein resides in the PML body. It is found in the nuclear body. The protein localises to the cytoplasm. Together with PML, this tumor suppressor is a major constituent of the PML bodies, a subnuclear organelle involved in a large number of physiological processes including cell growth, differentiation and apoptosis. Functions as a transcriptional coactivator of ETS1 and ETS2. Under certain conditions, it may also act as a corepressor of ETS1 preventing its binding to DNA. Through the regulation of ETS1 it may play a role in angiogenesis, controlling endothelial cell motility and invasion. Through interaction with the MRN complex it may be involved in the regulation of telomeres lengthening. May also regulate TP53-mediated transcription and through CASP8AP2, regulate FAS-mediated apoptosis. May also play a role in infection by viruses through mechanisms that may involve chromatin and/or transcriptional regulation. The polypeptide is Nuclear autoantigen Sp-100 (SP100) (Gorilla gorilla gorilla (Western lowland gorilla)).